A 487-amino-acid polypeptide reads, in one-letter code: 3-octaprenyl-4-hydroxybenzoate carboxy-lyase (487 aa).

Residue asparagine 172 participates in Mn(2+) binding. Prenylated FMN is bound by residues 175 to 177, 189 to 191, and 194 to 195; these read IYR, RWL, and RG. Mn(2+) is bound at residue glutamate 238. Aspartate 287 (proton donor) is an active-site residue.

This sequence belongs to the UbiD family. As to quaternary structure, homohexamer. Requires prenylated FMN as cofactor. Mn(2+) serves as cofactor.

The protein localises to the cell membrane. It carries out the reaction a 4-hydroxy-3-(all-trans-polyprenyl)benzoate + H(+) = a 2-(all-trans-polyprenyl)phenol + CO2. It functions in the pathway cofactor biosynthesis; ubiquinone biosynthesis. Functionally, catalyzes the decarboxylation of 3-octaprenyl-4-hydroxy benzoate to 2-octaprenylphenol, an intermediate step in ubiquinone biosynthesis. This Actinobacillus pleuropneumoniae serotype 7 (strain AP76) protein is 3-octaprenyl-4-hydroxybenzoate carboxy-lyase.